Consider the following 390-residue polypeptide: Methylthioribose-1-phosphate isomerase (390 aa).

Substrate is bound by residues 53–55 (RGA), arginine 90, and glutamine 207. Aspartate 248 serves as the catalytic Proton donor. Substrate is bound at residue 258-259 (NK).

It belongs to the EIF-2B alpha/beta/delta subunits family. MtnA subfamily.

The enzyme catalyses 5-(methylsulfanyl)-alpha-D-ribose 1-phosphate = 5-(methylsulfanyl)-D-ribulose 1-phosphate. It carries out the reaction 5-deoxy-alpha-D-ribose 1-phosphate = 5-deoxy-D-ribulose 1-phosphate. It participates in amino-acid biosynthesis; L-methionine biosynthesis via salvage pathway; L-methionine from S-methyl-5-thio-alpha-D-ribose 1-phosphate: step 1/6. Functionally, catalyzes the interconversion of methylthioribose-1-phosphate (MTR-1-P) into methylthioribulose-1-phosphate (MTRu-1-P). Also catalyzes the interconversion of 5-deoxyribose 1-phosphate and 5-deoxyribulose 1-phosphate. Part of a bifunctional DHAP-shunt salvage pathway for SAM by-products. The chain is Methylthioribose-1-phosphate isomerase from Rhodospirillum rubrum (strain ATCC 11170 / ATH 1.1.1 / DSM 467 / LMG 4362 / NCIMB 8255 / S1).